A 357-amino-acid polypeptide reads, in one-letter code: O-methyltransferase 9 (357 aa).

S-adenosyl-L-methionine-binding residues include Gly-200, Asp-224, Asn-249, Phe-250, and Lys-263. Catalysis depends on His-267, which acts as the Proton acceptor.

Belongs to the class I-like SAM-binding methyltransferase superfamily. Cation-independent O-methyltransferase family. COMT subfamily.

It catalyses the reaction (3,5-dichloro-2,4,6-trihydroxyphenyl)hexan-1-one + S-adenosyl-L-methionine = 1-(3,5-dichloro-2,6-dihydroxy-4-methoxyphenyl)hexan-1-one + S-adenosyl-L-homocysteine + H(+). This is O-methyltransferase 9 (omt9) from Dictyostelium discoideum (Social amoeba).